The sequence spans 972 residues: uncharacterized protein (972 aa).

Positions 1–21 are cleaved as a signal peptide; sequence MTNMILLSAVFLSLAILETHC. Residues 22-932 lie on the Extracellular side of the membrane; that stretch reads ANHISTGIST…KELGEKLYHV (911 aa). Residues 892–912 form a disordered region; sequence EPTVTTTTESPPPPTTTTRQI. The helical transmembrane segment at 933–953 threads the bilayer; that stretch reads LFFMGVLTVSVAGGVIILSFI. At 954–972 the chain is on the cytoplasmic side; that stretch reads GCLIMRKMEDAPQKTKYSV.

It is found in the host membrane. This is an uncharacterized protein from Magallana gigas (Pacific oyster).